Here is a 453-residue protein sequence, read N- to C-terminus: uncharacterized protein (453 aa).

[4Fe-4S] cluster contacts are provided by Cys-74, Cys-80, Cys-83, and Cys-162. 4 residues coordinate S-adenosyl-L-methionine: Gln-286, Tyr-315, Glu-336, and Asp-384. Cys-411 acts as the Nucleophile in catalysis.

This sequence belongs to the class I-like SAM-binding methyltransferase superfamily. RNA M5U methyltransferase family.

This is an uncharacterized protein from Staphylococcus aureus (strain COL).